The primary structure comprises 465 residues: MIPVRGLEGRKVAVLGLGRSGLATARALEAGGAEPLLWDDSPEARAKAEGQGFTVTDLTRERAFEGVALLVTSPGIPHLYPAPNPVIARAMAAGVPVDNDIGLFFRSFATRDWDAFDQMPRVVCVTGSNGKSTTTALIHHILSEAGRPTQMAGNIGRGVLDLDPARDGEVVVLELSSYQTDLARALTPDVAVFTNLSPDHLDRHGGMGGYFAAKRRLFAEGGPDRAVIGVDEPEGLYLAGQLSVAPEDDRVIRISAGQKLERFGWSVFARKGFLAEWRKGRQMASIDLRAMPGLPGAHNHQNACAAYAACRTLGLAPRQIEAALASFAGLPHRSQTVGEKGGVRFVNDSKATNVDSAAKALQAFPKIRWIAGGLGKDGGIAALQPHLGSVVKAYLIGHSARDFALQIGATDHEICETMERAVARAAEEAQPGEVVLLAPAAASFDQYPNFEKRGEDFMEKVKALL.

Residue 127–133 (GSNGKST) participates in ATP binding.

Belongs to the MurCDEF family.

Its subcellular location is the cytoplasm. It catalyses the reaction UDP-N-acetyl-alpha-D-muramoyl-L-alanine + D-glutamate + ATP = UDP-N-acetyl-alpha-D-muramoyl-L-alanyl-D-glutamate + ADP + phosphate + H(+). Its pathway is cell wall biogenesis; peptidoglycan biosynthesis. Its function is as follows. Cell wall formation. Catalyzes the addition of glutamate to the nucleotide precursor UDP-N-acetylmuramoyl-L-alanine (UMA). The chain is UDP-N-acetylmuramoylalanine--D-glutamate ligase from Cereibacter sphaeroides (strain ATCC 17029 / ATH 2.4.9) (Rhodobacter sphaeroides).